Consider the following 290-residue polypeptide: 4-diphosphocytidyl-2-C-methyl-D-erythritol kinase (290 aa).

Lysine 8 is an active-site residue. ATP is bound at residue proline 89–serine 99. Aspartate 131 is an active-site residue.

The protein belongs to the GHMP kinase family. IspE subfamily.

It catalyses the reaction 4-CDP-2-C-methyl-D-erythritol + ATP = 4-CDP-2-C-methyl-D-erythritol 2-phosphate + ADP + H(+). The protein operates within isoprenoid biosynthesis; isopentenyl diphosphate biosynthesis via DXP pathway; isopentenyl diphosphate from 1-deoxy-D-xylulose 5-phosphate: step 3/6. Functionally, catalyzes the phosphorylation of the position 2 hydroxy group of 4-diphosphocytidyl-2C-methyl-D-erythritol. This Chlamydia felis (strain Fe/C-56) (Chlamydophila felis) protein is 4-diphosphocytidyl-2-C-methyl-D-erythritol kinase.